The sequence spans 150 residues: Arginine repressor (150 aa).

Belongs to the ArgR family.

The protein localises to the cytoplasm. It functions in the pathway amino-acid biosynthesis; L-arginine biosynthesis [regulation]. Its function is as follows. Regulates arginine biosynthesis genes. This chain is Arginine repressor, found in Finegoldia magna (strain ATCC 29328 / DSM 20472 / WAL 2508) (Peptostreptococcus magnus).